We begin with the raw amino-acid sequence, 309 residues long: Foldase protein PrsA (309 aa).

Residues 1 to 22 form the signal peptide; sequence MKTRSKLAAGFLTLMSVATLAA. Cysteine 23 carries N-palmitoyl cysteine lipidation. Cysteine 23 carries the S-diacylglycerol cysteine lipid modification. Positions 146–241 constitute a PpiC domain; sequence TPETSVQVIK…TSYYIIKVTD (96 aa).

The protein belongs to the PrsA family.

The protein localises to the cell membrane. The enzyme catalyses [protein]-peptidylproline (omega=180) = [protein]-peptidylproline (omega=0). In terms of biological role, plays a major role in protein secretion by helping the post-translocational extracellular folding of several secreted proteins. The chain is Foldase protein PrsA from Streptococcus agalactiae serotype Ia (strain ATCC 27591 / A909 / CDC SS700).